Reading from the N-terminus, the 397-residue chain is Protein RecA (397 aa).

The interval 1–23 (MALETKPAKDPAAEDKHELDPKR) is disordered. 83-90 (GPESSGKT) lines the ATP pocket.

This sequence belongs to the RecA family.

The protein resides in the cytoplasm. Functionally, can catalyze the hydrolysis of ATP in the presence of single-stranded DNA, the ATP-dependent uptake of single-stranded DNA by duplex DNA, and the ATP-dependent hybridization of homologous single-stranded DNAs. It interacts with LexA causing its activation and leading to its autocatalytic cleavage. The sequence is that of Protein RecA from Bifidobacterium longum (strain NCC 2705).